The sequence spans 659 residues: Threonine--tRNA ligase (659 aa).

Positions 1–60 constitute a TGS domain; sequence MTVYLPDGKPLELPEGATAKDVARALGEGWERRAVGAIVDGELYDLLKPLPQGAKVRLLT. 2 catalytic regions span residues 234–548 and 252–552; these read TAEE…EHFA and DHRR…GDFP. Residues C349, H400, and H529 each contribute to the Zn(2+) site.

It belongs to the class-II aminoacyl-tRNA synthetase family. As to quaternary structure, homodimer. It depends on Zn(2+) as a cofactor.

It is found in the cytoplasm. The enzyme catalyses tRNA(Thr) + L-threonine + ATP = L-threonyl-tRNA(Thr) + AMP + diphosphate + H(+). Functionally, catalyzes the attachment of threonine to tRNA(Thr) in a two-step reaction: L-threonine is first activated by ATP to form Thr-AMP and then transferred to the acceptor end of tRNA(Thr). Also edits incorrectly charged L-seryl-tRNA(Thr). The sequence is that of Threonine--tRNA ligase from Thermus thermophilus (strain ATCC 27634 / DSM 579 / HB8).